The sequence spans 704 residues: Polyribonucleotide nucleotidyltransferase (704 aa).

Residues Asp-486 and Asp-492 each coordinate Mg(2+). The 60-residue stretch at 553 to 612 folds into the KH domain; that stretch reads PRIYTMKINPEKIKDVIGKGGSVIRALTDETGTTIEIEDDGTIKIAATDGDKAKHAIRRI. Residues 622–690 enclose the S1 motif domain; it reads GRIYAGKVTR…RQGRIRLSIK (69 aa).

It belongs to the polyribonucleotide nucleotidyltransferase family. In terms of assembly, component of the RNA degradosome, which is a multiprotein complex involved in RNA processing and mRNA degradation. Mg(2+) serves as cofactor.

The protein localises to the cytoplasm. It catalyses the reaction RNA(n+1) + phosphate = RNA(n) + a ribonucleoside 5'-diphosphate. Functionally, involved in mRNA degradation. Catalyzes the phosphorolysis of single-stranded polyribonucleotides processively in the 3'- to 5'-direction. This chain is Polyribonucleotide nucleotidyltransferase, found in Yersinia pseudotuberculosis serotype IB (strain PB1/+).